The primary structure comprises 272 residues: Golgi to ER traffic protein 5 (272 aa).

Disordered regions lie at residues 1-35 (MSTV…HSGT) and 85-105 (LHAP…PGSS). The Ubiquitin-like domain occupies 108-198 (ITVHLKSARN…VEFGVMIIGG (91 aa)). Residues 212–231 (SAEQKESYEPPKPAVGPSGE) are disordered.

It belongs to the GET5 family. As to quaternary structure, forms homodimers via its C-terminal domain. Component of the get4/get5/sgt2 sorting complex. Binds directly sgt12 homodimers.

The protein resides in the cytoplasm. Component of the get4/get5/sgt2 sorting complex involved in the GET (guided entry of TA proteins) pathway that leads to the insertion of tail-anchored (TA) proteins into the endoplasmic reticulum. Get4 and get5 form an obligate complex that catalyzes the transfer of tail-anchored proteins destined to the endoplasmic reticulum from sgt2 to the cytosolic targeting factor which then targets the TA protein to the ER membrane via get1/get2. This Aspergillus fumigatus (strain ATCC MYA-4609 / CBS 101355 / FGSC A1100 / Af293) (Neosartorya fumigata) protein is Golgi to ER traffic protein 5.